The chain runs to 227 residues: Lipoprotein-releasing system ATP-binding protein LolD (227 aa).

The 221-residue stretch at 7–227 folds into the ABC transporter domain; it reads LRLERIGRAY…TLKDGRVVDL (221 aa). ATP is bound at residue 43-50; sequence APSGAGKS.

Belongs to the ABC transporter superfamily. Lipoprotein translocase (TC 3.A.1.125) family. In terms of assembly, the complex is composed of two ATP-binding proteins (LolD) and two transmembrane proteins (LolC and LolE).

Its subcellular location is the cell inner membrane. Part of the ABC transporter complex LolCDE involved in the translocation of mature outer membrane-directed lipoproteins, from the inner membrane to the periplasmic chaperone, LolA. Responsible for the formation of the LolA-lipoprotein complex in an ATP-dependent manner. This is Lipoprotein-releasing system ATP-binding protein LolD from Brucella abortus biovar 1 (strain 9-941).